Here is a 692-residue protein sequence, read N- to C-terminus: Elongation factor G (692 aa).

The region spanning Glu-8–Val-282 is the tr-type G domain. Residues Ala-17 to Thr-24, Asp-81 to His-85, and Asn-135 to Asp-138 contribute to the GTP site.

The protein belongs to the TRAFAC class translation factor GTPase superfamily. Classic translation factor GTPase family. EF-G/EF-2 subfamily.

It is found in the cytoplasm. In terms of biological role, catalyzes the GTP-dependent ribosomal translocation step during translation elongation. During this step, the ribosome changes from the pre-translocational (PRE) to the post-translocational (POST) state as the newly formed A-site-bound peptidyl-tRNA and P-site-bound deacylated tRNA move to the P and E sites, respectively. Catalyzes the coordinated movement of the two tRNA molecules, the mRNA and conformational changes in the ribosome. The sequence is that of Elongation factor G from Geobacillus sp. (strain WCH70).